Here is a 43-residue protein sequence, read N- to C-terminus: uncharacterized protein (43 aa).

Positions 13-43 (QLPRLSRPRQSHLPAQTPQPRLSYPKTRRQI) are disordered.

This is an uncharacterized protein from Clover yellow mosaic virus (CYMV).